A 442-amino-acid polypeptide reads, in one-letter code: C4-dicarboxylate transport protein (442 aa).

8 consecutive transmembrane segments (helical) span residues 19 to 39 (QLYFQVVVAIVAGVLLGHFEP), 55 to 75 (LVKMIIAPVIFLTIVTGIAGM), 90 to 110 (AYFLFFSTLALVVGMVVAHVV), 161 to 181 (ILQVLFVAVLFGISLAMVGDA), 199 to 219 (LVGILMKAAPLGAFGAIAFTI), 232 to 252 (WLVGSFYITSLLFVVVVLGFV), 318 to 338 (IYMTLAALFIAQATNTHLTLG), and 366 to 386 (AATLAVVPEVPVAGMALILGV).

Belongs to the dicarboxylate/amino acid:cation symporter (DAACS) (TC 2.A.23) family.

The protein localises to the cell inner membrane. Responsible for the transport of dicarboxylates such as succinate, fumarate, and malate from the periplasm across the membrane. The chain is C4-dicarboxylate transport protein from Delftia acidovorans (strain DSM 14801 / SPH-1).